Here is a 446-residue protein sequence, read N- to C-terminus: Glutamate-1-semialdehyde 2,1-aminomutase (446 aa).

At Lys-263 the chain carries N6-(pyridoxal phosphate)lysine.

Belongs to the class-III pyridoxal-phosphate-dependent aminotransferase family. HemL subfamily. Pyridoxal 5'-phosphate is required as a cofactor.

The protein resides in the cytoplasm. The enzyme catalyses (S)-4-amino-5-oxopentanoate = 5-aminolevulinate. Its pathway is porphyrin-containing compound metabolism; protoporphyrin-IX biosynthesis; 5-aminolevulinate from L-glutamyl-tRNA(Glu): step 2/2. In Haloquadratum walsbyi (strain DSM 16790 / HBSQ001), this protein is Glutamate-1-semialdehyde 2,1-aminomutase.